The sequence spans 635 residues: Biosynthetic arginine decarboxylase (635 aa).

At lysine 101 the chain carries N6-(pyridoxal phosphate)lysine. 284-294 lines the substrate pocket; sequence VDVGGGLGVDY.

Belongs to the Orn/Lys/Arg decarboxylase class-II family. SpeA subfamily. Requires Mg(2+) as cofactor. Pyridoxal 5'-phosphate serves as cofactor.

The catalysed reaction is L-arginine + H(+) = agmatine + CO2. Its pathway is amine and polyamine biosynthesis; agmatine biosynthesis; agmatine from L-arginine: step 1/1. In terms of biological role, catalyzes the biosynthesis of agmatine from arginine. The sequence is that of Biosynthetic arginine decarboxylase from Tolumonas auensis (strain DSM 9187 / NBRC 110442 / TA 4).